A 235-amino-acid polypeptide reads, in one-letter code: Large ribosomal subunit protein uL1 (235 aa).

This sequence belongs to the universal ribosomal protein uL1 family. As to quaternary structure, part of the 50S ribosomal subunit.

Its function is as follows. Binds directly to 23S rRNA. The L1 stalk is quite mobile in the ribosome, and is involved in E site tRNA release. In terms of biological role, protein L1 is also a translational repressor protein, it controls the translation of the L11 operon by binding to its mRNA. The protein is Large ribosomal subunit protein uL1 of Rhodospirillum centenum (strain ATCC 51521 / SW).